Reading from the N-terminus, the 351-residue chain is Homoserine O-acetyltransferase (351 aa).

The AB hydrolase-1 domain maps to 51 to 334 (VIWVLHALTG…IYGHDAFLIE (284 aa)). Ser-146 serves as the catalytic Nucleophile. A substrate-binding site is contributed by Arg-212. Catalysis depends on residues Asp-299 and His-328. Residue Asp-329 participates in substrate binding.

Belongs to the AB hydrolase superfamily. MetX family. Homodimer.

Its subcellular location is the cytoplasm. It carries out the reaction L-homoserine + acetyl-CoA = O-acetyl-L-homoserine + CoA. It functions in the pathway amino-acid biosynthesis; L-methionine biosynthesis via de novo pathway; O-acetyl-L-homoserine from L-homoserine: step 1/1. Functionally, transfers an acetyl group from acetyl-CoA to L-homoserine, forming acetyl-L-homoserine. This is Homoserine O-acetyltransferase from Cyclobacterium marinum (strain ATCC 25205 / DSM 745 / LMG 13164 / NCIMB 1802) (Flectobacillus marinus).